We begin with the raw amino-acid sequence, 290 residues long: Beta-lactamase OXY-2 (290 aa).

A signal peptide spans 1 to 27 (MIKSSWRKIAMLAAAVPLLLASGALWA). Residue Ser72 is the Acyl-ester intermediate of the active site. 236-238 (KTG) lines the substrate pocket.

It belongs to the class-A beta-lactamase family.

The catalysed reaction is a beta-lactam + H2O = a substituted beta-amino acid. Hydrolyzes broad-spectrum beta-lactam antibiotics. Active against all third-generation cephalosporins but ceftazidime. The protein is Beta-lactamase OXY-2 (bla) of Klebsiella oxytoca.